We begin with the raw amino-acid sequence, 555 residues long: uncharacterized protein (555 aa).

The N-terminal stretch at 1–28 is a signal peptide; that stretch reads MRSGLFGVLRWTAVGLVATLVASLALTA. A lipid anchor (N-palmitoyl cysteine) is attached at Cys-29. Cys-29 is lipidated: S-diacylglycerol cysteine.

It to M.tuberculosis Rv2585c and M.bovis Mb2616c.

The protein localises to the cell membrane. This is an uncharacterized protein from Mycobacterium leprae (strain TN).